We begin with the raw amino-acid sequence, 184 residues long: GTP-binding protein Rheb (184 aa).

A Glycyl lysine isopeptide (Lys-Gly) (interchain with G-Cter in ubiquitin) cross-link involves residue Lys8. GDP is bound by residues Ser16, Val17, Gly18, Lys19, Ser20, Ser21, Val32, and Asp33. Positions 16, 17, 18, 19, 20, 21, 32, 33, 35, 37, 38, 63, 119, 120, and 122 each coordinate GTP. Ser20 is a Mg(2+) binding site. The Effector region signature appears at 35–43 (YDPTIENTF). Thr38 is a binding site for Mg(2+). Position 119 (Asn119) interacts with GDP. Asp122 is a GDP binding site. Phosphoserine; by MAPKAPK5 is present on Ser130. Residue Ala150 coordinates GDP. A GTP-binding site is contributed by Ala150. Cys181 bears the Cysteine methyl ester mark. The S-farnesyl cysteine moiety is linked to residue Cys181. Residues 182–184 (SVM) constitute a propeptide, removed in mature form.

This sequence belongs to the small GTPase superfamily. Rheb family. As to quaternary structure, associates with the mTORC1 complex (MTOR, MLST8 and RPTOR) in a guanyl nucleotide-independent manner. Interacts with TSC2. Interacts with MCRS1; the interaction maintains RHEB at the lysosome in its active GTP-bound form and prevents its interaction with the mTORC1 complex inhibitor TSC2, ensuring activation of the mTORC1 complex by RHEB. Interacts (when prenylated) with PDE6D; this promotes release from membranes. Farnesylation is important for efficiently activating mTORC1-mediated signaling. Post-translationally, polyubiquitinated in response to amino acid, promoting its interaction with MTOR and mTORC1 activation. Deubiquitination by ATXN3 promotes recruitment of the TSC-TBC complex and RHEB inactivation by TSC2. Monoubiquitinated at Lys-8 by RNF152, promoting its association with the TSC-TBC complex. Deubiquitinated at Lys-8 by USP4, promoting mTORC1 activation. In terms of processing, phosphorylation by MAPKAPK5 impairs GTP-binding and inactivation.

The protein resides in the endomembrane system. It localises to the lysosome membrane. It is found in the golgi apparatus membrane. Its subcellular location is the endoplasmic reticulum membrane. The protein localises to the cytoplasm. The protein resides in the cytosol. It catalyses the reaction GTP + H2O = GDP + phosphate + H(+). With respect to regulation, alternates between an inactive form bound to GDP and an active form bound to GTP. Inactivated by the TSC-TBC complex via the GTPase activating protein (GAP) domain of TSC2. Autoinhibited by Tyr-35, which constrains the active site conformation, restricting the access of the catalytic Asp-65 to the nucleotide-binding pocket. Small GTPase that acts as an allosteric activator of the canonical mTORC1 complex, an evolutionarily conserved central nutrient sensor that stimulates anabolic reactions and macromolecule biosynthesis to promote cellular biomass generation and growth. In response to nutrients, growth factors or amino acids, specifically activates the protein kinase activity of MTOR, the catalytic component of the mTORC1 complex: acts by causing a conformational change that allows the alignment of residues in the active site of MTOR, thereby enhancing the phosphorylation of ribosomal protein S6 kinase (RPS6KB1 and RPS6KB2) and EIF4EBP1 (4E-BP1). RHEB is also required for localization of the TSC-TBC complex to lysosomal membranes. In response to starvation, RHEB is inactivated by the TSC-TBC complex, preventing activation of mTORC1. Has low intrinsic GTPase activity. This is GTP-binding protein Rheb from Mus musculus (Mouse).